The primary structure comprises 284 residues: Probable plastid-lipid-associated protein 10, chloroplastic (284 aa).

The N-terminal 40 residues, M1 to R40, are a transit peptide targeting the chloroplast.

It belongs to the PAP/fibrillin family.

The protein localises to the plastid. The protein resides in the chloroplast. It is found in the plastoglobule. The sequence is that of Probable plastid-lipid-associated protein 10, chloroplastic (PAP10) from Arabidopsis thaliana (Mouse-ear cress).